The sequence spans 298 residues: N-acetylmuramic acid 6-phosphate etherase (298 aa).

Positions 55 to 218 constitute an SIS domain; it reads IHAQVSGGGR…STGLMIKSGK (164 aa). E83 acts as the Proton donor in catalysis. The active site involves E114.

It belongs to the GCKR-like family. MurNAc-6-P etherase subfamily. Homodimer.

It carries out the reaction N-acetyl-D-muramate 6-phosphate + H2O = N-acetyl-D-glucosamine 6-phosphate + (R)-lactate. Its pathway is amino-sugar metabolism; 1,6-anhydro-N-acetylmuramate degradation. It participates in amino-sugar metabolism; N-acetylmuramate degradation. The protein operates within cell wall biogenesis; peptidoglycan recycling. Functionally, specifically catalyzes the cleavage of the D-lactyl ether substituent of MurNAc 6-phosphate, producing GlcNAc 6-phosphate and D-lactate. Together with AnmK, is also required for the utilization of anhydro-N-acetylmuramic acid (anhMurNAc) either imported from the medium or derived from its own cell wall murein, and thus plays a role in cell wall recycling. The sequence is that of N-acetylmuramic acid 6-phosphate etherase from Escherichia coli O157:H7 (strain EC4115 / EHEC).